Reading from the N-terminus, the 321-residue chain is Nodulation protein D 1 (321 aa).

In terms of domain architecture, HTH lysR-type spans 6–63 (LDLNLLVALDALMTERKLTAAARSINLSQPAMSAAITRLRTYFRDELFTMNGRELVPT). Residues 23–42 (LTAAARSINLSQPAMSAAIT) constitute a DNA-binding region (H-T-H motif).

It belongs to the LysR transcriptional regulatory family.

Functionally, nodD regulates the expression of the nodABCFE genes which encode other nodulation proteins. NodD is also a negative regulator of its own expression. Binds flavonoids as inducers. This is Nodulation protein D 1 (nodD1) from Bradyrhizobium japonicum.